The chain runs to 741 residues: Oosporein cluster regulator OpS3 (741 aa).

Positions Gly16–Gln39 are disordered. Over residues Arg20–Ser34 the composition is skewed to low complexity. The segment at residues Cys44–Cys69 is a DNA-binding region (zn(2)-C6 fungal-type). The tract at residues His139–Ala167 is disordered. Residues Thr473–Leu500 are a coiled coil. The interval Thr501–Asn528 is disordered. Residues Arg506–Asn528 are compositionally biased toward polar residues.

It localises to the nucleus. In terms of biological role, transcription factor involved in regulation of gene cluster that mediates the biosynthesis of oosporein, a metabolite required for fungal virulence that acts by evading host immunity to facilitate fungal multiplication in insects. Binds oosporein cluster genes at a conserved 5'-CGGA-3' motif with the exception of OpS5. The presence of this motif in the OpS3 promoter would suggest the formation of a positive feedback loop for self-activation. This Beauveria bassiana (strain ARSEF 2860) (White muscardine disease fungus) protein is Oosporein cluster regulator OpS3.